A 66-amino-acid chain; its full sequence is Large ribosomal subunit protein bL32 (66 aa).

Positions 1-19 are enriched in basic residues; sequence MAIVPKRKTSKQRKHKRNT. The tract at residues 1–21 is disordered; the sequence is MAIVPKRKTSKQRKHKRNTHS.

The protein belongs to the bacterial ribosomal protein bL32 family.

The sequence is that of Large ribosomal subunit protein bL32 from Mycoplasmopsis synoviae (strain 53) (Mycoplasma synoviae).